We begin with the raw amino-acid sequence, 530 residues long: Inactive ubiquitin carboxyl-terminal hydrolase 17-like protein 7 (530 aa).

Positions 80–375 (AGLQKIGNTF…QAYVLFYIQK (296 aa)) constitute a USP domain. A compositionally biased stretch (basic and acidic residues) spans 382 to 392 (SESVSRGREPR). Disordered regions lie at residues 382-412 (SESV…KRDH), 431-454 (ESTL…NVRK), and 490-530 (SSTK…LVCQ). The span at 490-512 (SSTKPTDQESMNTGTLASLQGST) shows a compositional bias: polar residues. Basic residues predominate over residues 513–524 (RRSKGNNKHSKR).

The protein belongs to the peptidase C19 family. USP17 subfamily.

It localises to the nucleus. It is found in the endoplasmic reticulum. In Homo sapiens (Human), this protein is Inactive ubiquitin carboxyl-terminal hydrolase 17-like protein 7 (USP17L7).